Consider the following 91-residue polypeptide: Small ribosomal subunit protein bS16 (91 aa).

Belongs to the bacterial ribosomal protein bS16 family.

In Streptococcus mutans serotype c (strain ATCC 700610 / UA159), this protein is Small ribosomal subunit protein bS16.